We begin with the raw amino-acid sequence, 226 residues long: ATP synthase F(0) complex subunit a (226 aa).

The next 6 helical transmembrane spans lie at 6-26 (FASFAAPTILGLPAAVLIILF), 68-88 (WSLMLVSLIIFIATTNLLGLL), 97-117 (QLSMNLAMAIPLWAGTVVMGF), 138-158 (IPMLIIIETISLFIQPMALAV), 164-184 (ITAGHLLMHLIGSATLALSTI), and 189-209 (TLIIFTILILLTVLEIAVALI).

The protein belongs to the ATPase A chain family. Component of the ATP synthase complex composed at least of ATP5F1A/subunit alpha, ATP5F1B/subunit beta, ATP5MC1/subunit c (homooctomer), MT-ATP6/subunit a, MT-ATP8/subunit 8, ATP5ME/subunit e, ATP5MF/subunit f, ATP5MG/subunit g, ATP5MK/subunit k, ATP5MJ/subunit j, ATP5F1C/subunit gamma, ATP5F1D/subunit delta, ATP5F1E/subunit epsilon, ATP5PF/subunit F6, ATP5PB/subunit b, ATP5PD/subunit d, ATP5PO/subunit OSCP. ATP synthase complex consists of a soluble F(1) head domain (subunits alpha(3) and beta(3)) - the catalytic core - and a membrane F(0) domain - the membrane proton channel (subunits c, a, 8, e, f, g, k and j). These two domains are linked by a central stalk (subunits gamma, delta, and epsilon) rotating inside the F1 region and a stationary peripheral stalk (subunits F6, b, d, and OSCP). Interacts with DNAJC30; interaction is direct.

Its subcellular location is the mitochondrion inner membrane. The catalysed reaction is H(+)(in) = H(+)(out). Subunit a, of the mitochondrial membrane ATP synthase complex (F(1)F(0) ATP synthase or Complex V) that produces ATP from ADP in the presence of a proton gradient across the membrane which is generated by electron transport complexes of the respiratory chain. ATP synthase complex consist of a soluble F(1) head domain - the catalytic core - and a membrane F(1) domain - the membrane proton channel. These two domains are linked by a central stalk rotating inside the F(1) region and a stationary peripheral stalk. During catalysis, ATP synthesis in the catalytic domain of F(1) is coupled via a rotary mechanism of the central stalk subunits to proton translocation. With the subunit c (ATP5MC1), forms the proton-conducting channel in the F(0) domain, that contains two crucial half-channels (inlet and outlet) that facilitate proton movement from the mitochondrial intermembrane space (IMS) into the matrix. Protons are taken up via the inlet half-channel and released through the outlet half-channel, following a Grotthuss mechanism. In Pan paniscus (Pygmy chimpanzee), this protein is ATP synthase F(0) complex subunit a.